Consider the following 65-residue polypeptide: Toxin AaHIT4 (65 aa).

Residues 1-64 (EHGYLLNKYT…LWNYKTNKCD (64 aa)) enclose the LCN-type CS-alpha/beta domain. 4 disulfide bridges follow: Cys12-Cys63, Cys16-Cys38, Cys23-Cys45, and Cys27-Cys47.

This sequence belongs to the long (4 C-C) scorpion toxin superfamily. Sodium channel inhibitor family. In terms of tissue distribution, expressed by the venom gland.

The protein localises to the secreted. In terms of biological role, has a toxic effect on insects and mammals and is capable of competing with anti-insect scorpion toxins for binding to the sodium channel (Nav) of insects. It also modulates the binding of alpha-type and beta-type anti-mammal scorpion toxins to the mammal sodium channel. It may act on both site 3 and site 4 of voltage-gated sodium channels. In Androctonus australis (Sahara scorpion), this protein is Toxin AaHIT4.